We begin with the raw amino-acid sequence, 259 residues long: Putative hydro-lyase Rxyl_2409 (259 aa).

The tract at residues 1–24 is disordered; sequence MGAPGAAEARERIRRGEHAGPTAG. Positions 8–18 are enriched in basic and acidic residues; that stretch reads EARERIRRGEH.

It belongs to the D-glutamate cyclase family.

This chain is Putative hydro-lyase Rxyl_2409, found in Rubrobacter xylanophilus (strain DSM 9941 / JCM 11954 / NBRC 16129 / PRD-1).